A 458-amino-acid polypeptide reads, in one-letter code: MEEGLLRHENDRDDRRITACVILSTFVAVCSSFSYGCANGYTSGAETAIMKELDLSMAQFSAFGSFLNLGGAVGALFSGQLAVILGRRRTLWACDLFCIFGWLSIAFAKNVLWLDLGRISLGIGVGLTSYVVPVYIAEITPKHVRGAFSASTLLLQNSGISLIYFFGTVINWRVLAVIGALPCFIPVIGIYFIPESPRWLAKIGSVKEVENSLHRLRGKDADVSDEAAEIQVMTKMLEEDSKSSFCDMFQKKYRRTLVVGIGLMLIQQLSGASGITYYSNAIFRKAGFSERLGSMIFGVFVIPKALVGLILVDRWGRRPLLLASAVGMSIGSLLIGVSFTLQEMNLFPEFIPVFVFINILVYFGFFAIGIGGLPWIIMSEIFPINIKVSAGSIVALTSWTTGWFVSYGFNFMFEWSAQGTFYIFAMVGGLSLLFIWMLVPETKGQSLEELQASLTGTT.

The next 12 membrane-spanning stretches (helical) occupy residues 17–37, 66–86, 96–116, 119–139, 150–170, 174–194, 257–277, 292–312, 319–339, 350–370, 393–413, and 419–439; these read ITAC…SYGC, FLNL…VILG, LFCI…WLDL, ISLG…IAEI, ASTL…GTVI, VLAV…YFIP, LVVG…GITY, LGSM…LILV, PLLL…GVSF, FIPV…AIGI, IVAL…NFMF, and GTFY…WMLV.

Belongs to the major facilitator superfamily. Sugar transporter (TC 2.A.1.1) family.

The protein resides in the membrane. In terms of biological role, sugar transporter. This is Sugar transporter ERD6-like 10 from Arabidopsis thaliana (Mouse-ear cress).